Reading from the N-terminus, the 132-residue chain is Small ribosomal subunit protein uS11 (132 aa).

The segment at M1–A24 is disordered. Positions A7–R16 are enriched in basic residues.

Belongs to the universal ribosomal protein uS11 family. Part of the 30S ribosomal subunit. Interacts with proteins S7 and S18. Binds to IF-3.

In terms of biological role, located on the platform of the 30S subunit, it bridges several disparate RNA helices of the 16S rRNA. Forms part of the Shine-Dalgarno cleft in the 70S ribosome. The chain is Small ribosomal subunit protein uS11 from Bifidobacterium adolescentis (strain ATCC 15703 / DSM 20083 / NCTC 11814 / E194a).